A 398-amino-acid polypeptide reads, in one-letter code: Succinate--CoA ligase [ADP-forming] subunit beta (398 aa).

An ATP-grasp domain is found at 9–254 (KRLLHEYGAP…ISEEDPKEIE (246 aa)). ATP-binding positions include Lys-46, 53–55 (GRG), Glu-109, Ala-112, and Glu-117. The Mg(2+) site is built by Asn-209 and Asp-223. Residues Asn-274 and 331 to 333 (GIM) each bind substrate.

It belongs to the succinate/malate CoA ligase beta subunit family. In terms of assembly, heterotetramer of two alpha and two beta subunits. Requires Mg(2+) as cofactor.

The enzyme catalyses succinate + ATP + CoA = succinyl-CoA + ADP + phosphate. It carries out the reaction GTP + succinate + CoA = succinyl-CoA + GDP + phosphate. The protein operates within carbohydrate metabolism; tricarboxylic acid cycle; succinate from succinyl-CoA (ligase route): step 1/1. Functionally, succinyl-CoA synthetase functions in the citric acid cycle (TCA), coupling the hydrolysis of succinyl-CoA to the synthesis of either ATP or GTP and thus represents the only step of substrate-level phosphorylation in the TCA. The beta subunit provides nucleotide specificity of the enzyme and binds the substrate succinate, while the binding sites for coenzyme A and phosphate are found in the alpha subunit. This is Succinate--CoA ligase [ADP-forming] subunit beta from Bartonella bacilliformis (strain ATCC 35685 / KC583 / Herrer 020/F12,63).